Here is a 110-residue protein sequence, read N- to C-terminus: NADH-quinone oxidoreductase subunit K (110 aa).

3 helical membrane passes run 13–33, 41–61, and 73–93; these read LNHYLILSSLVFTIGMFGLFM, ILMSIELMLLAVNINFVAFSV, and IIILTVAAAETAIGLAILLIY.

This sequence belongs to the complex I subunit 4L family. In terms of assembly, NDH-1 is composed of 14 different subunits. Subunits NuoA, H, J, K, L, M, N constitute the membrane sector of the complex.

It localises to the cell inner membrane. It carries out the reaction a quinone + NADH + 5 H(+)(in) = a quinol + NAD(+) + 4 H(+)(out). Functionally, NDH-1 shuttles electrons from NADH, via FMN and iron-sulfur (Fe-S) centers, to quinones in the respiratory chain. The immediate electron acceptor for the enzyme in this species is believed to be ubiquinone. Couples the redox reaction to proton translocation (for every two electrons transferred, four hydrogen ions are translocated across the cytoplasmic membrane), and thus conserves the redox energy in a proton gradient. The chain is NADH-quinone oxidoreductase subunit K from Rickettsia typhi (strain ATCC VR-144 / Wilmington).